The sequence spans 710 residues: Ent-copalyl diphosphate synthase 1 (710 aa).

Lys145 provides a ligand contact to substrate. Mg(2+)-binding residues include Asp277 and Asp279. A DXDD motif motif is present at residues 277 to 280 (DIDD). Residue Lys364 participates in substrate binding.

It belongs to the terpene synthase family. Tpsc subfamily. The cofactor is Mg(2+). In terms of tissue distribution, expressed in germinating seeds and leaves.

The catalysed reaction is (2E,6E,10E)-geranylgeranyl diphosphate = ent-copalyl diphosphate. The protein operates within plant hormone biosynthesis; gibberellin biosynthesis. Its pathway is secondary metabolite biosynthesis; terpenoid biosynthesis. In terms of biological role, involved in the biosynthesis of ent-kaurene diterpenoids natural products such as oridonin, miltiradiene, eriocalyxin B and nezukol, known to exhibit antitumor, anti-inflammatory and antibacterial activities, and in the production of gibberellins phytohormones. Catalyzes the conversion of (2E,6E,10E)-geranylgeranyl diphosphate (GGPP) to ent-copalyl diphosphate (ent-CPP). In Isodon eriocalyx (Plectranthus eriocalyx), this protein is Ent-copalyl diphosphate synthase 1.